The following is a 342-amino-acid chain: tRNA N6-adenosine threonylcarbamoyltransferase (342 aa).

Fe cation contacts are provided by H111 and H115. Substrate-binding positions include 134–138, D167, G180, and N277; that span reads LVSGG. D305 lines the Fe cation pocket.

Belongs to the KAE1 / TsaD family. Requires Fe(2+) as cofactor.

It is found in the cytoplasm. The catalysed reaction is L-threonylcarbamoyladenylate + adenosine(37) in tRNA = N(6)-L-threonylcarbamoyladenosine(37) in tRNA + AMP + H(+). In terms of biological role, required for the formation of a threonylcarbamoyl group on adenosine at position 37 (t(6)A37) in tRNAs that read codons beginning with adenine. Is involved in the transfer of the threonylcarbamoyl moiety of threonylcarbamoyl-AMP (TC-AMP) to the N6 group of A37, together with TsaE and TsaB. TsaD likely plays a direct catalytic role in this reaction. The chain is tRNA N6-adenosine threonylcarbamoyltransferase from Haemophilus influenzae (strain ATCC 51907 / DSM 11121 / KW20 / Rd).